Reading from the N-terminus, the 102-residue chain is Small ribosomal subunit protein uS10 (102 aa).

The protein belongs to the universal ribosomal protein uS10 family. As to quaternary structure, part of the 30S ribosomal subunit.

Functionally, involved in the binding of tRNA to the ribosomes. In Chloroflexus aurantiacus (strain ATCC 29366 / DSM 635 / J-10-fl), this protein is Small ribosomal subunit protein uS10.